The chain runs to 159 residues: MPKFYCDYCDTYLTHDSPSVRKTHCSGRKHKENVKDYYQKWMEEQAQSLIDKTTAAFQQGKIPPAPFSAPPPAGAMIPPPPSLPGPPRPGMMPAPHMGGPPMMPMMGPPPPGMMPVGPAPGMRPPMGGHMPMMPGPPMMRPPARPMMVPTRPGMTRPDR.

The Matrin-type zinc-finger motif lies at 4-36 (FYCDYCDTYLTHDSPSVRKTHCSGRKHKENVKD). A Phosphotyrosine modification is found at Tyr-8. At Ser-17 the chain carries Phosphoserine. At Lys-52 the chain carries N6-acetyllysine. The interval 62–96 (IPPAPFSAPPPAGAMIPPPPSLPGPPRPGMMPAPH) is disordered. The segment covering 63–92 (PPAPFSAPPPAGAMIPPPPSLPGPPRPGMM) has biased composition (pro residues).

The protein belongs to the U1 small nuclear ribonucleoprotein C family. Component of the U1 snRNP. The U1 snRNP is composed of the U1 snRNA and the 7 core Sm proteins SNRPB, SNRPD1, SNRPD2, SNRPD3, SNRPE, SNRPF and SNRPG that assemble in a heptameric protein ring on the Sm site of the small nuclear RNA to form the core snRNP, and at least 3 U1 snRNP-specific proteins SNRNP70/U1-70K, SNRPA/U1-A and SNRPC/U1-C. SNRPC/U1-C interacts with U1 snRNA and the 5' splice-site region of the pre-mRNA. Interacts (via N-terminus) with TIA1 (via C-terminus); thereby promoting spliceosomal U1 snRNP recruitment to 5' splice sites.

It localises to the nucleus. Its function is as follows. Component of the spliceosomal U1 snRNP, which is essential for recognition of the pre-mRNA 5' splice-site and the subsequent assembly of the spliceosome. SNRPC/U1-C is directly involved in initial 5' splice-site recognition for both constitutive and regulated alternative splicing. The interaction with the 5' splice-site seems to precede base-pairing between the pre-mRNA and the U1 snRNA. Stimulates commitment or early (E) complex formation by stabilizing the base pairing of the 5' end of the U1 snRNA and the 5' splice-site region. In Rattus norvegicus (Rat), this protein is U1 small nuclear ribonucleoprotein C.